Here is a 426-residue protein sequence, read N- to C-terminus: Glutamate/glutamine/aspartate/asparagine transport system permease protein BztB (426 aa).

The next 8 membrane-spanning stretches (helical) occupy residues 25–45 (SITI…WLLN), 96–116 (LLVS…IGVL), 132–152 (VETF…TILA), 211–231 (LPVS…FWGW), 252–272 (WWPS…GLGF), 293–313 (SFTA…AEIV), 340–360 (SLVI…SQFL), and 396–416 (MLLM…LMNL). In terms of domain architecture, ABC transmembrane type-1 spans 92-414 (LLNTLLVSVL…TISLTISSLM (323 aa)).

It belongs to the binding-protein-dependent transport system permease family. HisMQ subfamily. BztB and BztC form a heterodimer which can form a membrane complex with a homodimer of BztD.

The protein resides in the cell inner membrane. In terms of biological role, part of a binding-protein-dependent transport system for glutamate, glutamine, aspartate and asparagine. Probably responsible for the translocation of the substrate across the membrane. This chain is Glutamate/glutamine/aspartate/asparagine transport system permease protein BztB (bztB), found in Rhodobacter capsulatus (strain ATCC BAA-309 / NBRC 16581 / SB1003).